The chain runs to 394 residues: NAD(P)H-quinone oxidoreductase subunit H (394 aa).

It belongs to the complex I 49 kDa subunit family. In terms of assembly, NDH-1 can be composed of about 15 different subunits; different subcomplexes with different compositions have been identified which probably have different functions.

It is found in the cellular thylakoid membrane. It carries out the reaction a plastoquinone + NADH + (n+1) H(+)(in) = a plastoquinol + NAD(+) + n H(+)(out). The enzyme catalyses a plastoquinone + NADPH + (n+1) H(+)(in) = a plastoquinol + NADP(+) + n H(+)(out). Functionally, NDH-1 shuttles electrons from an unknown electron donor, via FMN and iron-sulfur (Fe-S) centers, to quinones in the respiratory and/or the photosynthetic chain. The immediate electron acceptor for the enzyme in this species is believed to be plastoquinone. Couples the redox reaction to proton translocation, and thus conserves the redox energy in a proton gradient. Cyanobacterial NDH-1 also plays a role in inorganic carbon-concentration. This chain is NAD(P)H-quinone oxidoreductase subunit H, found in Prochlorococcus marinus (strain MIT 9313).